Reading from the N-terminus, the 255-residue chain is Acetylglutamate kinase (255 aa).

Substrate-binding positions include 40–41 (GG), Arg62, and Asn153.

The protein belongs to the acetylglutamate kinase family. ArgB subfamily.

It localises to the cytoplasm. It catalyses the reaction N-acetyl-L-glutamate + ATP = N-acetyl-L-glutamyl 5-phosphate + ADP. The protein operates within amino-acid biosynthesis; L-arginine biosynthesis; N(2)-acetyl-L-ornithine from L-glutamate: step 2/4. Functionally, catalyzes the ATP-dependent phosphorylation of N-acetyl-L-glutamate. This is Acetylglutamate kinase from Bacillus anthracis (strain CDC 684 / NRRL 3495).